Reading from the N-terminus, the 345-residue chain is 4-hydroxyproline 2-epimerase 1 (345 aa).

Substrate is bound at residue Q85. The active-site Proton acceptor is the S93. Substrate contacts are provided by residues 94 to 95 and D251; that span reads GS. The active-site Proton donor is the C255. 256–257 lines the substrate pocket; it reads GT.

The protein belongs to the proline racemase family.

It carries out the reaction trans-4-hydroxy-L-proline = cis-4-hydroxy-D-proline. Its function is as follows. Catalyzes the epimerization of trans-4-hydroxy-L-proline (t4LHyp) to cis-4-hydroxy-D-proline (c4DHyp). May be involved in a degradation pathway of t4LHyp. Can also catalyze the epimerization of trans-3-hydroxy-L-proline (t3LHyp) to cis-3-hydroxy-D-proline (c3DHyp) in vitro. Displays no proline racemase activity. The sequence is that of 4-hydroxyproline 2-epimerase 1 from Rhizobium rhizogenes (strain K84 / ATCC BAA-868) (Agrobacterium radiobacter).